A 179-amino-acid chain; its full sequence is Large ribosomal subunit protein uL6 (179 aa).

Belongs to the universal ribosomal protein uL6 family. In terms of assembly, part of the 50S ribosomal subunit.

Functionally, this protein binds to the 23S rRNA, and is important in its secondary structure. It is located near the subunit interface in the base of the L7/L12 stalk, and near the tRNA binding site of the peptidyltransferase center. This chain is Large ribosomal subunit protein uL6, found in Chlorobium phaeobacteroides (strain BS1).